A 1056-amino-acid polypeptide reads, in one-letter code: RNA cytidine acetyltransferase (1056 aa).

286-295 (GRGKSAALGI) serves as a coordination point for ATP. A compositionally biased stretch (polar residues) spans 433 to 446 (QNNTSGRESTQTAV). Residues 433–463 (QNNTSGRESTQTAVVSRDNKEKDSHLHSQSR) are disordered. The segment covering 449-463 (RDNKEKDSHLHSQSR) has biased composition (basic and acidic residues). Residue arginine 475 participates in ATP binding. An N-acetyltransferase domain is found at 566–706 (VLLPPIDPKD…VKLRDAKTLP (141 aa)). Acetyl-CoA-binding positions include 638–640 (IAT), 645–651 (ASMGYGS), and asparagine 739. Phosphoserine is present on residues serine 1001, serine 1007, and serine 1010.

Belongs to the RNA cytidine acetyltransferase family. NAT10 subfamily. As to quaternary structure, interacts with TAN1. Associates with 90S pre-ribosomal particles.

The protein localises to the nucleus. The protein resides in the nucleolus. It catalyses the reaction a cytidine in 18S rRNA + acetyl-CoA + ATP + H2O = an N(4)-acetylcytidine in 18S rRNA + ADP + phosphate + CoA + H(+). It carries out the reaction a cytidine in tRNA + acetyl-CoA + ATP + H2O = an N(4)-acetylcytidine in tRNA + ADP + phosphate + CoA + H(+). RNA cytidine acetyltransferase with specificity toward both 18S rRNA and tRNAs. Catalyzes the formation of N(4)-acetylcytidine (ac4C) at positions 1280 and 1773 in 18S rRNA. Required for early nucleolar cleavages of precursor rRNA at sites A0, A1 and A2 during 18S rRNA synthesis. Catalyzes the formation of ac4C at position 12 in serine and leucine tRNAs. Requires the tRNA-binding adapter protein TAN1 for full tRNA acetyltransferase activity but not for 18S rRNA acetylation. The polypeptide is RNA cytidine acetyltransferase (Saccharomyces cerevisiae (strain ATCC 204508 / S288c) (Baker's yeast)).